Reading from the N-terminus, the 492-residue chain is Lysine--tRNA ligase (492 aa).

Residues E403 and E410 each contribute to the Mg(2+) site.

Belongs to the class-II aminoacyl-tRNA synthetase family. As to quaternary structure, homodimer. Mg(2+) serves as cofactor.

The protein localises to the cytoplasm. It catalyses the reaction tRNA(Lys) + L-lysine + ATP = L-lysyl-tRNA(Lys) + AMP + diphosphate. The chain is Lysine--tRNA ligase from Mycoplasmoides gallisepticum (strain R(low / passage 15 / clone 2)) (Mycoplasma gallisepticum).